A 150-amino-acid chain; its full sequence is Large ribosomal subunit protein bL9 (150 aa).

Belongs to the bacterial ribosomal protein bL9 family.

In terms of biological role, binds to the 23S rRNA. The polypeptide is Large ribosomal subunit protein bL9 (Hydrogenovibrio crunogenus (strain DSM 25203 / XCL-2) (Thiomicrospira crunogena)).